Consider the following 135-residue polypeptide: Large ribosomal subunit protein uL16c (135 aa).

The protein belongs to the universal ribosomal protein uL16 family. Part of the 50S ribosomal subunit.

Its subcellular location is the plastid. It is found in the chloroplast. The protein is Large ribosomal subunit protein uL16c of Nymphaea alba (White water-lily).